A 176-amino-acid polypeptide reads, in one-letter code: ATP-dependent protease subunit HslV (176 aa).

The active site involves Thr2. Residues Gly157, Cys160, and Thr163 each contribute to the Na(+) site.

Belongs to the peptidase T1B family. HslV subfamily. A double ring-shaped homohexamer of HslV is capped on each side by a ring-shaped HslU homohexamer. The assembly of the HslU/HslV complex is dependent on binding of ATP.

It is found in the cytoplasm. It carries out the reaction ATP-dependent cleavage of peptide bonds with broad specificity.. Its activity is regulated as follows. Allosterically activated by HslU binding. Its function is as follows. Protease subunit of a proteasome-like degradation complex believed to be a general protein degrading machinery. This is ATP-dependent protease subunit HslV from Klebsiella pneumoniae (strain 342).